A 303-amino-acid polypeptide reads, in one-letter code: Bifunctional protein FolD (303 aa).

Residues 165 to 167, serine 190, and isoleucine 231 contribute to the NADP(+) site; that span reads GRS.

This sequence belongs to the tetrahydrofolate dehydrogenase/cyclohydrolase family. Homodimer.

It catalyses the reaction (6R)-5,10-methylene-5,6,7,8-tetrahydrofolate + NADP(+) = (6R)-5,10-methenyltetrahydrofolate + NADPH. The enzyme catalyses (6R)-5,10-methenyltetrahydrofolate + H2O = (6R)-10-formyltetrahydrofolate + H(+). It functions in the pathway one-carbon metabolism; tetrahydrofolate interconversion. In terms of biological role, catalyzes the oxidation of 5,10-methylenetetrahydrofolate to 5,10-methenyltetrahydrofolate and then the hydrolysis of 5,10-methenyltetrahydrofolate to 10-formyltetrahydrofolate. The protein is Bifunctional protein FolD of Prochlorococcus marinus (strain NATL2A).